A 255-amino-acid polypeptide reads, in one-letter code: Short chain dehydrogenase adrF (255 aa).

NADP(+) is bound by residues Ile-11, Arg-118, Tyr-150, Lys-154, and Val-183. Catalysis depends on Tyr-150, which acts as the Proton acceptor. Lys-154 functions as the Lowers pKa of active site Tyr in the catalytic mechanism.

The protein belongs to the short-chain dehydrogenases/reductases (SDR) family.

Its pathway is secondary metabolite biosynthesis; terpenoid biosynthesis. Its function is as follows. Short chain dehydrogenase; part of the gene cluster that mediates the biosynthesis of andrastins, meroterpenoid compounds that exhibit inhibitory activity against ras farnesyltransferase, suggesting that they could be promising leads for antitumor agents. The first step of the pathway is the synthesis of 3,5-dimethylorsellinic acid (DMOA) by the polyketide synthase adrD via condensation of one acetyl-CoA starter unit with 3 malonyl-CoA units and 2 methylations. DMAO is then converted to farnesyl-DMAO by the prenyltransferase adrG. The methyltransferase adrK catalyzes the methylation of the carboxyl group of farnesyl-DMAO to farnesyl-DMAO methyl ester which is further converted to epoxyfarnesyl-DMAO methyl ester by the FAD-dependent monooxygenase adrH. The terpene cyclase adrI then catalyzes the carbon skeletal rearrangement to generate the andrastin E, the first compound in the pathway having the andrastin scaffold, with the tetracyclic ring system. The post-cyclization tailoring enzymes adrF, adrE, adrJ, and adrA, are involved in the conversion of andrastin E into andrastin A. The short chain dehydrogenase adrF is responsible for the oxidation of the C-3 a hydroxyl group of andrastin E to yield the corresponding ketone, andrastin D. The ketoreductase adrE stereoselectively reduces the carbonyl moiety to reverse the stereochemistry of the C-3 position to yield andrastin F. The acetyltransferase adrJ is the acetyltransferase that attaches the acetyl group to the C-3 hydroxyl group of andrastin F to yield andrastin C. Finally, the cytochrome P450 monooxygenase adrA catalyzes two sequential oxidation reactions of the C-23 methyl group, to generate the corresponding alcohol andrastin B, and aldehyde andrastin A. The chain is Short chain dehydrogenase adrF from Penicillium rubens (strain ATCC 28089 / DSM 1075 / NRRL 1951 / Wisconsin 54-1255) (Penicillium chrysogenum).